Consider the following 246-residue polypeptide: Proteasome subunit alpha type-6 (246 aa).

It belongs to the peptidase T1A family. The 26S proteasome consists of a 20S proteasome core and two 19S regulatory subunits. The 20S proteasome core is composed of 28 subunits that are arranged in four stacked rings, resulting in a barrel-shaped structure. The two end rings are each formed by seven alpha subunits, and the two central rings are each formed by seven beta subunits. The catalytic chamber with the active sites is on the inside of the barrel.

Its subcellular location is the cytoplasm. It is found in the nucleus. The proteasome is a multicatalytic proteinase complex which is characterized by its ability to cleave peptides with Arg, Phe, Tyr, Leu, and Glu adjacent to the leaving group at neutral or slightly basic pH. The proteasome has an ATP-dependent proteolytic activity. The sequence is that of Proteasome subunit alpha type-6 (PAA1) from Oryza sativa subsp. japonica (Rice).